Consider the following 129-residue polypeptide: Small ribosomal subunit protein uS11 (129 aa).

Belongs to the universal ribosomal protein uS11 family. In terms of assembly, part of the 30S ribosomal subunit. Interacts with proteins S7 and S18. Binds to IF-3.

Functionally, located on the platform of the 30S subunit, it bridges several disparate RNA helices of the 16S rRNA. Forms part of the Shine-Dalgarno cleft in the 70S ribosome. This is Small ribosomal subunit protein uS11 from Haemophilus ducreyi (strain 35000HP / ATCC 700724).